The following is a 650-amino-acid chain: Probable Xaa-Pro aminopeptidase P (650 aa).

Residues Asp447, Asp458, Glu556, and Glu570 each contribute to the Mn(2+) site.

The protein belongs to the peptidase M24B family. It depends on Mn(2+) as a cofactor.

It carries out the reaction Release of any N-terminal amino acid, including proline, that is linked to proline, even from a dipeptide or tripeptide.. Catalyzes the removal of a penultimate prolyl residue from the N-termini of peptides. The chain is Probable Xaa-Pro aminopeptidase P (AMPP) from Phaeosphaeria nodorum (strain SN15 / ATCC MYA-4574 / FGSC 10173) (Glume blotch fungus).